A 338-amino-acid polypeptide reads, in one-letter code: Cytochrome c biogenesis protein CcsA (338 aa).

The next 8 helical transmembrane spans lie at 11-31, 39-59, 76-96, 100-120, 145-165, 244-264, 278-295, and 305-325; these read VLLD…YWLA, LLHE…TGLL, ESLF…EAFA, LVGV…SLTL, VMIL…AFLI, LIGL…VWAN, TWSL…HARI, and ATLA…VNFL.

It belongs to the CcmF/CycK/Ccl1/NrfE/CcsA family. In terms of assembly, may interact with ccs1.

Its subcellular location is the cell inner membrane. In terms of biological role, required during biogenesis of c-type cytochromes (cytochrome c6 and cytochrome f) at the step of heme attachment. In Gloeobacter violaceus (strain ATCC 29082 / PCC 7421), this protein is Cytochrome c biogenesis protein CcsA.